The chain runs to 348 residues: NADH-ubiquinone oxidoreductase chain 2 (348 aa).

10 consecutive transmembrane segments (helical) span residues 2 to 22, 26 to 46, 55 to 75, 96 to 116, 149 to 169, 178 to 198, 199 to 219, 242 to 262, 276 to 296, and 323 to 343; these read SPYV…LTLF, WLMA…MMTY, AAIK…FAII, VLMT…FWVP, LNMK…GWGG, ILAY…MINP, SLAL…FLML, TAIL…GFMP, IIMA…YMRI, and INII…TPLL.

The protein belongs to the complex I subunit 2 family. As to quaternary structure, core subunit of respiratory chain NADH dehydrogenase (Complex I) which is composed of 45 different subunits. Interacts with TMEM242.

The protein localises to the mitochondrion inner membrane. The catalysed reaction is a ubiquinone + NADH + 5 H(+)(in) = a ubiquinol + NAD(+) + 4 H(+)(out). In terms of biological role, core subunit of the mitochondrial membrane respiratory chain NADH dehydrogenase (Complex I) that is believed to belong to the minimal assembly required for catalysis. Complex I functions in the transfer of electrons from NADH to the respiratory chain. The immediate electron acceptor for the enzyme is believed to be ubiquinone. The sequence is that of NADH-ubiquinone oxidoreductase chain 2 from Osphranter robustus (Wallaroo).